The following is a 311-amino-acid chain: Giardin subunit gamma (311 aa).

Residues 185-233 (GLQTEINSLEAIIEREFAQAANRLNQEVSNFKESFDASERNIKLQKKHV) are a coiled coil.

In terms of assembly, interacts with EB1.

It localises to the cytoplasm. The protein resides in the cytoskeleton. In terms of biological role, giardins are involved in parasite attachment to the intestinal mucosa and in the cytoskeletal disassembly and reassembly that marks the transition from infectious trophozoite to transmissible cyst. They may interact with other cytoskeletal proteins such as microtubules in the microribbons or crossbridges, to maintain the integrity of the ventral disk. Involved in formation of the ventral disk. The protein is Giardin subunit gamma of Giardia intestinalis (Giardia lamblia).